Reading from the N-terminus, the 147-residue chain is Arginine repressor (147 aa).

This sequence belongs to the ArgR family.

It localises to the cytoplasm. It functions in the pathway amino-acid biosynthesis; L-arginine biosynthesis [regulation]. Functionally, regulates arginine biosynthesis genes. The polypeptide is Arginine repressor (Chlamydia felis (strain Fe/C-56) (Chlamydophila felis)).